The sequence spans 129 residues: Fluoride-specific ion channel FluC (129 aa).

4 helical membrane-spanning segments follow: residues 1-21 (MLMK…LGSA), 35-55 (GGLP…IGFI), 71-91 (LFLV…IFEN), and 105-125 (AYLA…TFFA). Residues G79 and T82 each coordinate Na(+).

This sequence belongs to the fluoride channel Fluc/FEX (TC 1.A.43) family.

The protein localises to the cell inner membrane. The catalysed reaction is fluoride(in) = fluoride(out). Its activity is regulated as follows. Na(+) is not transported, but it plays an essential structural role and its presence is essential for fluoride channel function. In terms of biological role, fluoride-specific ion channel. Important for reducing fluoride concentration in the cell, thus reducing its toxicity. This Chlorobium phaeobacteroides (strain DSM 266 / SMG 266 / 2430) protein is Fluoride-specific ion channel FluC.